Reading from the N-terminus, the 159-residue chain is Ribosomal RNA large subunit methyltransferase H (159 aa).

S-adenosyl-L-methionine contacts are provided by residues Leu-76, Gly-108, and 127 to 132; that span reads FSKMTF.

This sequence belongs to the RNA methyltransferase RlmH family. As to quaternary structure, homodimer.

Its subcellular location is the cytoplasm. It catalyses the reaction pseudouridine(1915) in 23S rRNA + S-adenosyl-L-methionine = N(3)-methylpseudouridine(1915) in 23S rRNA + S-adenosyl-L-homocysteine + H(+). In terms of biological role, specifically methylates the pseudouridine at position 1915 (m3Psi1915) in 23S rRNA. This is Ribosomal RNA large subunit methyltransferase H from Bacillus velezensis (strain DSM 23117 / BGSC 10A6 / LMG 26770 / FZB42) (Bacillus amyloliquefaciens subsp. plantarum).